Here is a 158-residue protein sequence, read N- to C-terminus: Crossover junction endodeoxyribonuclease RuvC (158 aa).

Catalysis depends on residues aspartate 7, glutamate 66, and aspartate 139. Mg(2+) is bound by residues aspartate 7, glutamate 66, and aspartate 139.

It belongs to the RuvC family. In terms of assembly, homodimer which binds Holliday junction (HJ) DNA. The HJ becomes 2-fold symmetrical on binding to RuvC with unstacked arms; it has a different conformation from HJ DNA in complex with RuvA. In the full resolvosome a probable DNA-RuvA(4)-RuvB(12)-RuvC(2) complex forms which resolves the HJ. Mg(2+) is required as a cofactor.

The protein resides in the cytoplasm. The enzyme catalyses Endonucleolytic cleavage at a junction such as a reciprocal single-stranded crossover between two homologous DNA duplexes (Holliday junction).. Functionally, the RuvA-RuvB-RuvC complex processes Holliday junction (HJ) DNA during genetic recombination and DNA repair. Endonuclease that resolves HJ intermediates. Cleaves cruciform DNA by making single-stranded nicks across the HJ at symmetrical positions within the homologous arms, yielding a 5'-phosphate and a 3'-hydroxyl group; requires a central core of homology in the junction. The consensus cleavage sequence is 5'-(A/T)TT(C/G)-3'. Cleavage occurs on the 3'-side of the TT dinucleotide at the point of strand exchange. HJ branch migration catalyzed by RuvA-RuvB allows RuvC to scan DNA until it finds its consensus sequence, where it cleaves and resolves the cruciform DNA. This is Crossover junction endodeoxyribonuclease RuvC from Campylobacter lari (strain RM2100 / D67 / ATCC BAA-1060).